The primary structure comprises 158 residues: UPF0102 protein GbCGDNIH1_0975 (158 aa).

It belongs to the UPF0102 family.

The polypeptide is UPF0102 protein GbCGDNIH1_0975 (Granulibacter bethesdensis (strain ATCC BAA-1260 / CGDNIH1)).